A 58-amino-acid chain; its full sequence is Large ribosomal subunit protein uL30 (58 aa).

The protein belongs to the universal ribosomal protein uL30 family. As to quaternary structure, part of the 50S ribosomal subunit.

The polypeptide is Large ribosomal subunit protein uL30 (Trichlorobacter lovleyi (strain ATCC BAA-1151 / DSM 17278 / SZ) (Geobacter lovleyi)).